Reading from the N-terminus, the 182-residue chain is Oligoribonuclease (182 aa).

Residues 8–171 (LIWLDMEMTG…ADIHESIGEL (164 aa)) enclose the Exonuclease domain. Tyrosine 129 is an active-site residue.

It belongs to the oligoribonuclease family.

It is found in the cytoplasm. Functionally, 3'-to-5' exoribonuclease specific for small oligoribonucleotides. The sequence is that of Oligoribonuclease from Azoarcus sp. (strain BH72).